The following is a 627-amino-acid chain: Neutral endopeptidase (627 aa).

The Peptidase M13 domain maps to 1 to 627 (MTRIQDDLFA…RAPENRLKIW (627 aa)). His475 is a Zn(2+) binding site. The active site involves Glu476. Positions 479 and 535 each coordinate Zn(2+). The Proton donor role is filled by Asp539.

Belongs to the peptidase M13 family. Monomer. It depends on Zn(2+) as a cofactor.

It is found in the cytoplasm. Its function is as follows. Endopeptidase with broad substrate specificity for several oligopeptides. In Lactococcus lactis subsp. cremoris (Streptococcus cremoris), this protein is Neutral endopeptidase (pepO).